The following is a 201-amino-acid chain: Large ribosomal subunit protein uL4 (201 aa).

Positions 43 to 71 (TRAQKTRSDVSGGGKKPWRQKGTGRARSG) are disordered.

Belongs to the universal ribosomal protein uL4 family. In terms of assembly, part of the 50S ribosomal subunit.

Its function is as follows. One of the primary rRNA binding proteins, this protein initially binds near the 5'-end of the 23S rRNA. It is important during the early stages of 50S assembly. It makes multiple contacts with different domains of the 23S rRNA in the assembled 50S subunit and ribosome. Forms part of the polypeptide exit tunnel. The sequence is that of Large ribosomal subunit protein uL4 from Psychromonas ingrahamii (strain DSM 17664 / CCUG 51855 / 37).